The sequence spans 5596 residues: Midasin (5596 aa).

Met1 carries the post-translational modification N-acetylmethionine. AAA-ATPase protomer stretches follow at residues 307–591, 659–978, 1048–1316, and 1362–1616; these read SVCK…TSKL, LIEQ…ASNP, KEPT…QEEI, and HIVW…NKMG. Residue 329–336 coordinates ATP; that stretch reads GPIGCGKT. Positions 517–537 are disordered; the sequence is SSVGCEQAPEEVSEARRENKR. ATP is bound by residues 677–684 and 1084–1091; these read GETGTGKT and GETSVGKT. Thr1177 carries the post-translational modification Phosphothreonine. 1390-1397 contributes to the ATP binding site; it reads GDTGCGKT. An N6-acetyllysine modification is found at Lys1683. AAA-ATPase protomer stretches follow at residues 1738-1995 and 2053-2313; these read RLLR…AVFK and MKCV…IYIS. ATP contacts are provided by residues 1753-1760 and 2066-2073; these read GSPGVGKT and GPASVGKT. The residue at position 1754 (Ser1754) is a Phosphoserine. A linker region spans residues 2418-4691; the sequence is SLRAHETWGD…EGEGMKDVSD (2274 aa). The disordered stretch occupies residues 3989 to 4008; the sequence is LVESDKEEQPDFLPRPTDGA. Position 4212 is a phosphothreonine (Thr4212). Phosphoserine is present on Ser4538. Disordered regions lie at residues 4669–4688 and 4700–5260; these read ATEFHDYEGGGIGEGEGMKD and EDTF…SRES. Over residues 4702–4724 the composition is skewed to basic and acidic residues; it reads TFQKGQEKDKEDPDSKSDIKGED. Over residues 4741-4757 the composition is skewed to acidic residues; sequence ELEEQEEDDEKSDSEGG. Phosphoserine occurs at positions 4752 and 4754. The segment covering 4758–4780 has biased composition (basic and acidic residues); it reads DLDKHMGDLNGEEADKLDERLWG. Residues 4781–4794 show a composition bias toward acidic residues; it reads DDDEEEDEEEEDNK. Over residues 4822 to 4834 the composition is skewed to basic and acidic residues; the sequence is NKDKSQQDKKEEK. Residues 4835–4844 show a composition bias toward acidic residues; the sequence is EEAEADDGGQ. A compositionally biased stretch (basic and acidic residues) spans 4845-4855; sequence GEDKINEQIDE. Residues 4877-4888 show a composition bias toward acidic residues; it reads EALDLPDDLNLD. At Ser4889 the chain carries Phosphoserine. Residues 4896 to 4908 are compositionally biased toward acidic residues; that stretch reads EDTDNEEGEEENP. Position 4898 is a phosphothreonine (Thr4898). Residues 4909–4928 are compositionally biased toward basic and acidic residues; it reads LEIKEKPEEAGHEAEERGET. A phosphoserine mark is found at Ser4937 and Ser4946. The span at 4940–4966 shows a compositional bias: acidic residues; sequence EPEEGPSEDDKAEGEEEMDTGADDQDG. A compositionally biased stretch (basic and acidic residues) spans 4968–4989; that stretch reads AAQHPEEHSEEQQQSVEEKDKE. The span at 5007-5021 shows a compositional bias: acidic residues; sequence QEEEEREDSDTEEQV. The residue at position 5015 (Ser5015) is a Phosphoserine. Residues 5033 to 5046 show a composition bias toward polar residues; the sequence is CGQTGVENMQNTQA. Basic and acidic residues predominate over residues 5054–5064; it reads PEKEQGKEEHG. The span at 5088–5101 shows a compositional bias: basic residues; sequence KHTRKNTQSFKRKP. Residues 5105–5115 are compositionally biased toward basic and acidic residues; it reads DNERSMGDHNE. Residues 5132 to 5141 show a composition bias toward low complexity; the sequence is QGPAQQPQAQ. Over residues 5181 to 5197 the composition is skewed to acidic residues; the sequence is QEEEEIEDTLMDTEEQE. 2 stretches are compositionally biased toward basic and acidic residues: residues 5198–5213 and 5233–5260; these read EFKAADVEQLKPEEIK and KTEEDQDPRTDKAHKETENEKPERSRES. The 200-residue stretch at 5384-5583 folds into the VWFA domain; that stretch reads QICLAIDDSS…ALPETLSDAL (200 aa).

It belongs to the midasin family. Associates with pre-60S ribosomes in the nucleoplasm. Interacts (via its hexameric AAA ATPase ring) with the PELP1 complex (via PELP1); the interaction is regulated by SUMO conjugation of PELP1 and is crucial for recruitment of MDN1 to the pre-ribosomal particle. Interacts (via VWFA/MIDAS domain) with WDR12 (via UBL domain). Interacts (via VWFA/MIDAS domain) with NLE1 (via UBL domain).

It is found in the nucleus. Its subcellular location is the nucleolus. It localises to the nucleoplasm. The protein localises to the cytoplasm. Its function is as follows. Nuclear chaperone required for maturation and nuclear export of pre-60S ribosome subunits. Functions at successive maturation steps to remove ribosomal factors at critical transition points, first driving the exit of early pre-60S particles from the nucleolus and then driving late pre-60S particles from the nucleus. At an early stage in 60S maturation, mediates the dissociation of the PeBoW complex (PES1-BOP1-WDR12) from early pre-60S particles, rendering them competent for export from the nucleolus to the nucleoplasm. Subsequently recruited to the nucleoplasmic particles through interaction with SUMO-conjugated PELP1 complex. This binding is only possible if the 5S RNP at the central protuberance has undergone the rotation to complete its maturation. The polypeptide is Midasin (MDN1) (Homo sapiens (Human)).